Reading from the N-terminus, the 435-residue chain is MNKLLIFIMLVTFLAIEKSFMSEVDNMKLEFVQTIWRHGDRSALEGLFPISEKNWTFGGGGLGELTPMGMSEMNNLGTIFRRRYVEDQQFLSHRYAAKEIYIRSTNLNRTIISAMSLLYGMFPPGAWNIQGVDYPNDVDWQQGFTFIPVHVDGIDQCAVAQLCNCRRFQELQEKWAELDEVKNATVAMIALNRRVAAFYNVTDQPEKFNRYTDAWKCQRNWFNDTMYQQLPWYNEDLYNEAQRTYAPFKRFTEGNFAKPSIVDGIDIPQEVSTLQGGPLLNEIFERGREKIRCVADAENCSIDYLKPLKFYAYSSHDQLVYALLVTLGITDVVKTVDGWPDTSSSLTIEYYSNPGNQSSVKFLYRDNSNDNFSDVTSQIPVCNGAQYCAMSDFQNIAYQFKPLPDYMTLCETSLSSISSVLNNKIWVFVIIYFLI.

Histidine 38 (nucleophile) is an active-site residue. The Proton donor role is filled by aspartate 317. Cysteine 382 and cysteine 388 are disulfide-bonded.

It belongs to the histidine acid phosphatase family.

The catalysed reaction is a phosphate monoester + H2O = an alcohol + phosphate. This Caenorhabditis elegans protein is Putative acid phosphatase F26C11.1.